Consider the following 293-residue polypeptide: N-acetylneuraminate lyase (293 aa).

Aceneuramate contacts are provided by Ser47 and Thr48. The Proton donor role is filled by Tyr136. The active-site Schiff-base intermediate with substrate is Lys164. Aceneuramate contacts are provided by Thr166, Gly188, Asp190, Glu191, and Ser207.

It belongs to the DapA family. NanA subfamily. In terms of assembly, homotetramer.

The protein localises to the cytoplasm. It carries out the reaction aceneuramate = aldehydo-N-acetyl-D-mannosamine + pyruvate. Its pathway is amino-sugar metabolism; N-acetylneuraminate degradation; D-fructose 6-phosphate from N-acetylneuraminate: step 1/5. Catalyzes the reversible aldol cleavage of N-acetylneuraminic acid (sialic acid; Neu5Ac) to form pyruvate and N-acetylmannosamine (ManNAc) via a Schiff base intermediate. This chain is N-acetylneuraminate lyase, found in Haemophilus influenzae (strain ATCC 51907 / DSM 11121 / KW20 / Rd).